The primary structure comprises 353 residues: MYYLSDLSHYAFFTYISVRAGFAFFIALCLSLFLMPKFITWAKAKNASQPIYEYAPETHKTKCHTPTMGGLIFISSAVIASLFCIKFDNIFAISALLCLILFCLIGLIDDLGKVLKKDNHSGLSPRMKLLAQIIAGLICILPLYFSSELSTELFIPFYKHPLFDMEIFAIAFWILVLISSSNAVNLTDGLDGLATVPSIFSLSTLGIFLYLSGNLNYSEYLLLPKIQGLGEVVIICAALIGALMGFLWYNCYPAQVFMGDSGSLALGGFIGFLAIISKNEILLLLIGFVFVLETVSVILQVGSFKIFNKRVFKMAPIHHHFEKVGWVENKIIVRFWMIALLSNLLALASIKLR.

10 helical membrane-spanning segments follow: residues 22–42, 65–85, 88–108, 129–149, 161–181, 192–212, 228–248, 256–276, 281–301, and 330–350; these read FAFF…ITWA, TPTM…LFCI, DNIF…IGLI, LLAQ…SSEL, PLFD…ISSS, GLAT…LYLS, GLGE…GFLW, VFMG…LAII, ILLL…ILQV, and KIIV…LASI.

This sequence belongs to the glycosyltransferase 4 family. MraY subfamily. Requires Mg(2+) as cofactor.

It is found in the cell inner membrane. It catalyses the reaction UDP-N-acetyl-alpha-D-muramoyl-L-alanyl-gamma-D-glutamyl-meso-2,6-diaminopimeloyl-D-alanyl-D-alanine + di-trans,octa-cis-undecaprenyl phosphate = di-trans,octa-cis-undecaprenyl diphospho-N-acetyl-alpha-D-muramoyl-L-alanyl-D-glutamyl-meso-2,6-diaminopimeloyl-D-alanyl-D-alanine + UMP. It participates in cell wall biogenesis; peptidoglycan biosynthesis. Catalyzes the initial step of the lipid cycle reactions in the biosynthesis of the cell wall peptidoglycan: transfers peptidoglycan precursor phospho-MurNAc-pentapeptide from UDP-MurNAc-pentapeptide onto the lipid carrier undecaprenyl phosphate, yielding undecaprenyl-pyrophosphoryl-MurNAc-pentapeptide, known as lipid I. The chain is Phospho-N-acetylmuramoyl-pentapeptide-transferase from Campylobacter jejuni (strain RM1221).